A 318-amino-acid chain; its full sequence is Probable endolytic peptidoglycan transglycosylase RlpA (318 aa).

An N-terminal signal peptide occupies residues 1–21 (MMDKRVVAVAAVLWNVQMLFA). The tract at residues 121 to 191 (DPNAHASQQR…GVANTTDVPA (71 aa)) is disordered. The segment covering 125 to 137 (HASQQRNDRQTSP) has biased composition (polar residues).

The protein belongs to the RlpA family.

Its function is as follows. Lytic transglycosylase with a strong preference for naked glycan strands that lack stem peptides. The chain is Probable endolytic peptidoglycan transglycosylase RlpA from Treponema pallidum (strain Nichols).